Consider the following 257-residue polypeptide: Protein IMPACT homolog (257 aa).

The RWD domain maps to 9–102 (AEIESLASIF…SLVQDFIRDL (94 aa)).

The protein belongs to the IMPACT family. Interacts with gcn-1; prevents the interaction of gcn-1 with gcn-2 and inhibits gcn-2 kinase activity. Interaction with rpl-39; this interaction occurs in a gcn-1-independent manner. Associates with ribosomes; this interaction occurs in a gcn-1-independent manner. Associates with actin; this interaction occurs in a gcn-1-independent manner.

The protein resides in the cytoplasm. In terms of biological role, translational regulator that ensures constant high levels of translation under amino acid starvation. Plays a role as a negative regulator of the gcn-2 kinase activity; impairs gcn-1-mediated gcn-2 activation, and hence gcn-2-mediated eIF-2-alpha phosphorylation and subsequent down-regulation of protein synthesis in amino acid-starved cells. Plays a role in differentiation of neuronal cells by stimulating neurite outgrowth. This chain is Protein IMPACT homolog, found in Caenorhabditis elegans.